Here is a 320-residue protein sequence, read N- to C-terminus: Ribonuclease Z (320 aa).

Zn(2+) is bound by residues histidine 63, histidine 65, aspartate 67, histidine 68, histidine 141, aspartate 212, and histidine 270. Catalysis depends on aspartate 67, which acts as the Proton acceptor.

Belongs to the RNase Z family. Homodimer. It depends on Zn(2+) as a cofactor.

It carries out the reaction Endonucleolytic cleavage of RNA, removing extra 3' nucleotides from tRNA precursor, generating 3' termini of tRNAs. A 3'-hydroxy group is left at the tRNA terminus and a 5'-phosphoryl group is left at the trailer molecule.. Zinc phosphodiesterase, which displays some tRNA 3'-processing endonuclease activity. Probably involved in tRNA maturation, by removing a 3'-trailer from precursor tRNA. This Lacticaseibacillus casei (strain BL23) (Lactobacillus casei) protein is Ribonuclease Z.